The following is a 537-amino-acid chain: Chaperonin GroEL (537 aa).

Residues 31–34 (TLGP), 87–91 (DGTTT), G415, and D495 each bind ATP.

It belongs to the chaperonin (HSP60) family. In terms of assembly, forms a cylinder of 14 subunits composed of two heptameric rings stacked back-to-back. Interacts with the co-chaperonin GroES.

It is found in the cytoplasm. It catalyses the reaction ATP + H2O + a folded polypeptide = ADP + phosphate + an unfolded polypeptide.. In terms of biological role, together with its co-chaperonin GroES, plays an essential role in assisting protein folding. The GroEL-GroES system forms a nano-cage that allows encapsulation of the non-native substrate proteins and provides a physical environment optimized to promote and accelerate protein folding. The sequence is that of Chaperonin GroEL from Methanoregula boonei (strain DSM 21154 / JCM 14090 / 6A8).